Consider the following 220-residue polypeptide: Probable nicotinate-nucleotide adenylyltransferase (220 aa).

This sequence belongs to the NadD family.

The catalysed reaction is nicotinate beta-D-ribonucleotide + ATP + H(+) = deamido-NAD(+) + diphosphate. It participates in cofactor biosynthesis; NAD(+) biosynthesis; deamido-NAD(+) from nicotinate D-ribonucleotide: step 1/1. In terms of biological role, catalyzes the reversible adenylation of nicotinate mononucleotide (NaMN) to nicotinic acid adenine dinucleotide (NaAD). The protein is Probable nicotinate-nucleotide adenylyltransferase of Yersinia enterocolitica serotype O:8 / biotype 1B (strain NCTC 13174 / 8081).